We begin with the raw amino-acid sequence, 197 residues long: Phosphoheptose isomerase (197 aa).

Residues 34–196 (MVQCLLGGNK…DRTLFPQDEQ (163 aa)) form the SIS domain. 49-51 (NGG) is a binding site for substrate. His-58 and Glu-62 together coordinate Zn(2+). Substrate contacts are provided by residues Glu-62, 91 to 92 (ND), 117 to 119 (STS), Ser-122, and Gln-172. Zn(2+) is bound by residues Gln-172 and His-180.

The protein belongs to the SIS family. GmhA subfamily. Homotetramer. Zn(2+) is required as a cofactor.

The protein resides in the cytoplasm. It carries out the reaction 2 D-sedoheptulose 7-phosphate = D-glycero-alpha-D-manno-heptose 7-phosphate + D-glycero-beta-D-manno-heptose 7-phosphate. Its pathway is carbohydrate biosynthesis; D-glycero-D-manno-heptose 7-phosphate biosynthesis; D-glycero-alpha-D-manno-heptose 7-phosphate and D-glycero-beta-D-manno-heptose 7-phosphate from sedoheptulose 7-phosphate: step 1/1. Its function is as follows. Catalyzes the isomerization of sedoheptulose 7-phosphate in D-glycero-D-manno-heptose 7-phosphate. This is Phosphoheptose isomerase from Shewanella piezotolerans (strain WP3 / JCM 13877).